The following is a 98-amino-acid chain: HssA/B-like protein 33 (98 aa).

2 disordered regions span residues 1–29 (MTLFSSISSMSSSMTSSRSSFSSFGSGTS) and 60–98 (AKSSGGSCGGKGGPHNHGHGNGHGPHGHGGKGSGGSCSC). The span at 60–72 (AKSSGGSCGGKGG) shows a compositional bias: gly residues. The segment covering 73–88 (PHNHGHGNGHGPHGHG) has biased composition (basic residues). The span at 89–98 (GKGSGGSCSC) shows a compositional bias: gly residues.

It belongs to the hssA/B family.

The protein is HssA/B-like protein 33 (hssl33) of Dictyostelium discoideum (Social amoeba).